The following is a 340-amino-acid chain: Heat-inducible transcription repressor HrcA (340 aa).

Belongs to the HrcA family.

Functionally, negative regulator of class I heat shock genes (grpE-dnaK-dnaJ and groELS operons). Prevents heat-shock induction of these operons. This Chromobacterium violaceum (strain ATCC 12472 / DSM 30191 / JCM 1249 / CCUG 213 / NBRC 12614 / NCIMB 9131 / NCTC 9757 / MK) protein is Heat-inducible transcription repressor HrcA.